The chain runs to 515 residues: Maturase K (515 aa).

The protein belongs to the intron maturase 2 family. MatK subfamily.

Its subcellular location is the plastid. The protein localises to the chloroplast. In terms of biological role, usually encoded in the trnK tRNA gene intron. Probably assists in splicing its own and other chloroplast group II introns. This Picea abies (Norway spruce) protein is Maturase K.